Reading from the N-terminus, the 361-residue chain is Probable cytosolic iron-sulfur protein assembly protein 1 (361 aa).

7 WD repeats span residues 10 to 49 (AHSD…NFPQ), 56 to 105 (THKR…TEIL), 120 to 160 (GHEN…EEFE), 167 to 206 (DHQH…DDWS), 213 to 265 (GHEG…SIKH), 280 to 319 (VHQY…SWSI), and 327 to 361 (HGVH…IWKP).

Belongs to the WD repeat CIA1 family. As to quaternary structure, interacts with NAR1.

Its subcellular location is the cytoplasm. It localises to the nucleus. In terms of biological role, essential component of the cytosolic iron-sulfur (Fe/S) protein assembly machinery. Required for the maturation of extramitochondrial Fe/S proteins. In Scheffersomyces stipitis (strain ATCC 58785 / CBS 6054 / NBRC 10063 / NRRL Y-11545) (Yeast), this protein is Probable cytosolic iron-sulfur protein assembly protein 1.